We begin with the raw amino-acid sequence, 548 residues long: Lipase 2 (548 aa).

An N-terminal signal peptide occupies residues 1–14 (MKLCLLALGAAVAA). A disulfide bridge connects residues cysteine 74 and cysteine 111. The active-site Acyl-ester intermediate is the serine 223. A disulfide bridge links cysteine 282 with cysteine 291. Glutamate 355 acts as the Charge relay system in catalysis. Asparagine 365 carries N-linked (GlcNAc...) asparagine glycosylation. Histidine 463 functions as the Charge relay system in the catalytic mechanism.

The protein belongs to the type-B carboxylesterase/lipase family.

The enzyme catalyses a triacylglycerol + H2O = a diacylglycerol + a fatty acid + H(+). This chain is Lipase 2 (LIP2), found in Diutina rugosa (Yeast).